The sequence spans 549 residues: Undecaprenyl phosphate-alpha-4-amino-4-deoxy-L-arabinose arabinosyl transferase (549 aa).

The next 12 helical transmembrane spans lie at 9–29, 80–100, 112–132, 136–156, 166–186, 204–224, 256–276, 288–308, 312–332, 346–366, 376–396, and 402–422; these read LLLI…GLWI, LFGV…LAYL, SLAC…SGYA, PQFT…LDAG, ILLG…AWLL, LLGY…PWAL, PWWF…GLLP, QAPV…FSLS, LPTY…HALV, NGLL…YLQL, FELF…LAQW, and AWAA…AAMP.

It belongs to the glycosyltransferase 83 family.

It is found in the cell inner membrane. It catalyses the reaction 4-amino-4-deoxy-alpha-L-arabinopyranosyl di-trans,octa-cis-undecaprenyl phosphate + lipid IVA = lipid IIA + di-trans,octa-cis-undecaprenyl phosphate.. The protein operates within lipopolysaccharide metabolism; 4-amino-4-deoxy-beta-L-arabinose-lipid A biosynthesis. Catalyzes the transfer of the L-Ara4N moiety of the glycolipid undecaprenyl phosphate-alpha-L-Ara4N to lipid A. The modified arabinose is attached to lipid A and is required for resistance to polymyxin and cationic antimicrobial peptides. The chain is Undecaprenyl phosphate-alpha-4-amino-4-deoxy-L-arabinose arabinosyl transferase from Pseudomonas aeruginosa (strain UCBPP-PA14).